A 168-amino-acid polypeptide reads, in one-letter code: Transcription antitermination protein NusB (168 aa).

The protein belongs to the NusB family.

Its function is as follows. Involved in transcription antitermination. Required for transcription of ribosomal RNA (rRNA) genes. Binds specifically to the boxA antiterminator sequence of the ribosomal RNA (rrn) operons. This is Transcription antitermination protein NusB from Brucella anthropi (strain ATCC 49188 / DSM 6882 / CCUG 24695 / JCM 21032 / LMG 3331 / NBRC 15819 / NCTC 12168 / Alc 37) (Ochrobactrum anthropi).